Here is a 427-residue protein sequence, read N- to C-terminus: Tol-Pal system protein TolB (427 aa).

A signal peptide spans 1–23; that stretch reads MKLLKRLVSVFAIVLAVGSNAFA.

The protein belongs to the TolB family. The Tol-Pal system is composed of five core proteins: the inner membrane proteins TolA, TolQ and TolR, the periplasmic protein TolB and the outer membrane protein Pal. They form a network linking the inner and outer membranes and the peptidoglycan layer.

It localises to the periplasm. Functionally, part of the Tol-Pal system, which plays a role in outer membrane invagination during cell division and is important for maintaining outer membrane integrity. This is Tol-Pal system protein TolB from Haemophilus influenzae (strain PittGG).